We begin with the raw amino-acid sequence, 366 residues long: Chorismate synthase (366 aa).

NADP(+)-binding residues include Arg48 and Arg54. Residues 125 to 127 (RSS), 237 to 238 (NA), Gly277, 292 to 296 (KPTSS), and Arg318 contribute to the FMN site.

Belongs to the chorismate synthase family. In terms of assembly, homotetramer. Requires FMNH2 as cofactor.

It catalyses the reaction 5-O-(1-carboxyvinyl)-3-phosphoshikimate = chorismate + phosphate. The protein operates within metabolic intermediate biosynthesis; chorismate biosynthesis; chorismate from D-erythrose 4-phosphate and phosphoenolpyruvate: step 7/7. Catalyzes the anti-1,4-elimination of the C-3 phosphate and the C-6 proR hydrogen from 5-enolpyruvylshikimate-3-phosphate (EPSP) to yield chorismate, which is the branch point compound that serves as the starting substrate for the three terminal pathways of aromatic amino acid biosynthesis. This reaction introduces a second double bond into the aromatic ring system. The sequence is that of Chorismate synthase from Acidovorax ebreus (strain TPSY) (Diaphorobacter sp. (strain TPSY)).